Here is a 343-residue protein sequence, read N- to C-terminus: Aspartate-semialdehyde dehydrogenase (343 aa).

11-14 contacts NADP(+); it reads TGMV. Arginine 109 provides a ligand contact to phosphate. Cysteine 148 acts as the Acyl-thioester intermediate in catalysis. Residue glutamine 174 coordinates substrate. 177 to 178 serves as a coordination point for NADP(+); sequence SG. Glutamate 200 contacts substrate. Phosphate is bound at residue lysine 203. Arginine 233 contacts substrate. The Proton acceptor role is filled by histidine 240. 321 to 322 serves as a coordination point for NADP(+); it reads NT.

Belongs to the aspartate-semialdehyde dehydrogenase family. As to quaternary structure, homodimer.

The catalysed reaction is L-aspartate 4-semialdehyde + phosphate + NADP(+) = 4-phospho-L-aspartate + NADPH + H(+). It participates in amino-acid biosynthesis; L-lysine biosynthesis via DAP pathway; (S)-tetrahydrodipicolinate from L-aspartate: step 2/4. The protein operates within amino-acid biosynthesis; L-methionine biosynthesis via de novo pathway; L-homoserine from L-aspartate: step 2/3. Its pathway is amino-acid biosynthesis; L-threonine biosynthesis; L-threonine from L-aspartate: step 2/5. Functionally, catalyzes the NADPH-dependent formation of L-aspartate-semialdehyde (L-ASA) by the reductive dephosphorylation of L-aspartyl-4-phosphate. This is Aspartate-semialdehyde dehydrogenase from Archaeoglobus fulgidus (strain ATCC 49558 / DSM 4304 / JCM 9628 / NBRC 100126 / VC-16).